The sequence spans 101 residues: Small ribosomal subunit protein uS14 (101 aa).

The segment covering 1–10 (MAKKSAIEKN) has biased composition (basic and acidic residues). The tract at residues 1 to 23 (MAKKSAIEKNNRRKKMTKNAAPK) is disordered. Residues 11–23 (NRRKKMTKNAAPK) are compositionally biased toward basic residues.

As to quaternary structure, part of the 30S ribosomal subunit. Contacts proteins S3 and S10.

Its function is as follows. Binds 16S rRNA, required for the assembly of 30S particles and may also be responsible for determining the conformation of the 16S rRNA at the A site. The chain is Small ribosomal subunit protein uS14 from Rhodopseudomonas palustris (strain ATCC BAA-98 / CGA009).